We begin with the raw amino-acid sequence, 282 residues long: MPLLFKKIKDLRNFLKNKRCEGKEIGFVPTMGYLHEGHRQLIKLARMQNDIVVVSIFVNPTQFGEGEDYDRYPRDLERDLEICEEEGVDVVFAPEVDEIYPKGYRTKVCVGELGKVLEGEFRPGHFDGVATIVVKLFNIVQPNRAYFGEKDYQQLKIIEQVVEDLNIPVEIVPVPIVREEDGLAYSSRNVYLSPEERESALSIYKSFLLAEKMIKAGERDAKRIKEAIRAFIERHPHVKGVDYVEITDQNLNPKETVEKGDRILVAVRVGNARLIDNWKVQS.

ATP is bound at residue 31–38 (MGYLHEGH). Residue His-38 is the Proton donor of the active site. Gln-62 provides a ligand contact to (R)-pantoate. Gln-62 is a beta-alanine binding site. ATP is bound at residue 148-151 (GEKD). Residue Gln-154 participates in (R)-pantoate binding. ATP-binding positions include Val-177 and 185 to 188 (YSSR).

This sequence belongs to the pantothenate synthetase family. Homodimer.

It is found in the cytoplasm. It catalyses the reaction (R)-pantoate + beta-alanine + ATP = (R)-pantothenate + AMP + diphosphate + H(+). Its pathway is cofactor biosynthesis; (R)-pantothenate biosynthesis; (R)-pantothenate from (R)-pantoate and beta-alanine: step 1/1. Functionally, catalyzes the condensation of pantoate with beta-alanine in an ATP-dependent reaction via a pantoyl-adenylate intermediate. The sequence is that of Pantothenate synthetase from Aquifex aeolicus (strain VF5).